A 1486-amino-acid polypeptide reads, in one-letter code: Chromosome partition protein MukB (1486 aa).

34–41 is a binding site for ATP; it reads GGNGAGKS. 3 coiled-coil regions span residues 326 to 418, 444 to 480, and 509 to 603; these read LEAD…QYNQ, LETF…QAYQ, and RHLA…RAPV. Residues 666–783 form a flexible hinge region; that stretch reads PGGSEDQRLN…EVPLFGRAAR (118 aa). Coiled coils occupy residues 835 to 923, 977 to 1115, and 1209 to 1265; these read EAEI…AKLE, EMLS…TAKA, and VEAI…LQSV.

This sequence belongs to the SMC family. MukB subfamily. Homodimerization via its hinge domain. Binds to DNA via its C-terminal region. Interacts, and probably forms a ternary complex, with MukE and MukF via its C-terminal region. The complex formation is stimulated by calcium or magnesium. Interacts with tubulin-related protein FtsZ.

Its subcellular location is the cytoplasm. The protein resides in the nucleoid. Its function is as follows. Plays a central role in chromosome condensation, segregation and cell cycle progression. Functions as a homodimer, which is essential for chromosome partition. Involved in negative DNA supercoiling in vivo, and by this means organize and compact chromosomes. May achieve or facilitate chromosome segregation by condensation DNA from both sides of a centrally located replisome during cell division. This Escherichia coli O7:K1 (strain IAI39 / ExPEC) protein is Chromosome partition protein MukB.